A 240-amino-acid polypeptide reads, in one-letter code: Pyridoxine 5'-phosphate synthase (240 aa).

Asn-7 provides a ligand contact to 3-amino-2-oxopropyl phosphate. Residue 9–10 (DH) coordinates 1-deoxy-D-xylulose 5-phosphate. Position 18 (Arg-18) interacts with 3-amino-2-oxopropyl phosphate. The Proton acceptor role is filled by His-43. 1-deoxy-D-xylulose 5-phosphate contacts are provided by Arg-45 and His-50. The active-site Proton acceptor is the Glu-70. 1-deoxy-D-xylulose 5-phosphate is bound at residue Thr-100. His-191 (proton donor) is an active-site residue. Residues Gly-192 and 213–214 (GH) contribute to the 3-amino-2-oxopropyl phosphate site.

The protein belongs to the PNP synthase family. As to quaternary structure, homooctamer; tetramer of dimers.

Its subcellular location is the cytoplasm. It catalyses the reaction 3-amino-2-oxopropyl phosphate + 1-deoxy-D-xylulose 5-phosphate = pyridoxine 5'-phosphate + phosphate + 2 H2O + H(+). The protein operates within cofactor biosynthesis; pyridoxine 5'-phosphate biosynthesis; pyridoxine 5'-phosphate from D-erythrose 4-phosphate: step 5/5. Catalyzes the complicated ring closure reaction between the two acyclic compounds 1-deoxy-D-xylulose-5-phosphate (DXP) and 3-amino-2-oxopropyl phosphate (1-amino-acetone-3-phosphate or AAP) to form pyridoxine 5'-phosphate (PNP) and inorganic phosphate. This is Pyridoxine 5'-phosphate synthase from Trichodesmium erythraeum (strain IMS101).